The sequence spans 846 residues: Pseudolaratriene synthase, chloroplastic (846 aa).

A chloroplast-targeting transit peptide spans 1 to 58 (MSRFTSATHGLNLSIKMPISVSQVPSIRSNTSKYELQKLRSTGRSVLQTRRQLAIINM). Positions 595, 599, and 747 each coordinate Mg(2+). Positions 595-599 (DDIYD) match the DDXXD motif motif.

It belongs to the terpene synthase family. Mg(2+) serves as cofactor. As to expression, expressed in young and mature roots. Expressed at low levels in barks.

Its subcellular location is the plastid. The protein resides in the chloroplast. The enzyme catalyses (2E,6E,10E)-geranylgeranyl diphosphate = pseudolaratriene + diphosphate. It participates in terpene metabolism. Functionally, converts geranylgeranyl diphosphate to an new 5,7-fused bicyclic diterpene, named pseudolaratriene. Catalyzes the first committed step in pseudolaric acid B (PAB) biosynthesis. PAB exhibits antiproliferative activity by inhibiting microtubule polymerization, and has demonstrated antitumor properties against several cancer types. In Pseudolarix amabilis (Golden larch), this protein is Pseudolaratriene synthase, chloroplastic.